We begin with the raw amino-acid sequence, 953 residues long: Atromentin synthetase invA2 (953 aa).

Residues 38-460 (RAVSQYPNHE…SGRIKDTVIV (423 aa)) form an adenylation (A) domain region. A Carrier domain is found at 592–670 (APSTETEKTL…SLAKYVDSLI (79 aa)). The tract at residues 597–667 (TEKTLAGIYA…VISSLAKYVD (71 aa)) is thiolation and peptide carrier (T) domain. S629 carries the O-(pantetheine 4'-phosphoryl)serine modification. Residues 693-795 (PIFMVHPGVG…FTGLINIPPH (103 aa)) form a thioesterase (TE) domain region.

Belongs to the ATP-dependent AMP-binding enzyme family.

Its pathway is secondary metabolite biosynthesis. An L-tyrosine:2-oxoglutarate aminotransferase (probably invD) and atromentin synthetase invA2 catalyze consecutive steps to turn over L-tyrosine into atromentin, which represents the generic precursor molecule for the entire terphenylquinone and pulvinic acid family of pigments, which are widely distributed secondary metabolites in homobasidiomycetes. The first step catalyzed by the aminotransferase converts L-tyrosine in to 4-hydroxyphenylpyruvate (4-HPP). Adenylation of two 4-HPP monomers by the invA2 adenylation (A) domain, covalent tethering of the monomers as a thioester and oxoester onto the invA2 thiolation (T) and thioesterase (TE) domains, respectively, and symmetric C-C-bond formation between two monomers catalyzed by the invA2 TE domain leads to atromentin. The sequence is that of Atromentin synthetase invA2 (invA2) from Paxillus involutus (Naked brimcap).